Here is a 311-residue protein sequence, read N- to C-terminus: Taste receptor type 2 member 9 (311 aa).

The Extracellular portion of the chain corresponds to 1-9; it reads MPSTIEAIY. A helical membrane pass occupies residues 10 to 32; sequence IILIAGELTIGIWGNGFIVLVNC. The Cytoplasmic portion of the chain corresponds to 33-52; the sequence is IDWLKRRDVSLIDIILISLA. Residues 53 to 72 traverse the membrane as a helical segment; it reads ISRICLLCVISLDGFFILLF. At 73 to 86 the chain is on the extracellular side; sequence PGTYDINVLESIMD. The chain crosses the membrane as a helical span at residues 87-109; it reads AVWTFANNSSLWFTSCLSIFYLL. The Cytoplasmic segment spans residues 110–128; it reads KIANISHPFFFWLKLKINK. The helical transmembrane segment at 129–146 threads the bilayer; that stretch reads VILAILLGSFLISLIISF. Topologically, residues 147-179 are extracellular; it reads PINGXWYHLFKVSHEENITWAFKVSTIPGAFKQ. N-linked (GlcNAc...) asparagine glycosylation is present at asparagine 163. A helical transmembrane segment spans residues 180-202; it reads LTLNLGAMVPFMLCLISFFLLLF. Residues 203–233 lie on the Cytoplasmic side of the membrane; sequence SLVRHTKQIQLHATGLRDPSTEAHMRAIKAV. The chain crosses the membrane as a helical span at residues 234-256; the sequence is IIFLLLLIVYYPVFLVMTSSTLI. Topologically, residues 257-260 are extracellular; the sequence is PQGK. Residues 261-283 traverse the membrane as a helical segment; that stretch reads LVLMIGDIVTVIFPSSHSFILIM. Topologically, residues 284-311 are cytoplasmic; the sequence is GNSKLREAFLKMLRFVKGFLRRRKPFGP.

This sequence belongs to the G-protein coupled receptor T2R family.

It localises to the membrane. In terms of biological role, gustducin-coupled receptor implicated in the perception of bitter compounds in the oral cavity and the gastrointestinal tract. Signals through PLCB2 and the calcium-regulated cation channel TRPM5. In Papio hamadryas (Hamadryas baboon), this protein is Taste receptor type 2 member 9 (TAS2R9).